The sequence spans 537 residues: ATP-dependent 6-phosphofructokinase 5, chloroplastic (537 aa).

The transit peptide at 1–52 (MDALSQAISSGISVPYKNNSSSLVPSHGLTSLILRKSRSPVNPSSRSRVSVR) directs the protein to the chloroplast. The segment at 35-64 (RKSRSPVNPSSRSRVSVRASEIQHSKTSAS) is disordered. Residues 39–54 (SPVNPSSRSRVSVRAS) show a composition bias toward low complexity. At Ser147 the chain carries Phosphoserine. ATP contacts are provided by residues Gly189, 253–254 (RG), and 278–281 (GNGT). Asn279 serves as a coordination point for Mg(2+). Substrate contacts are provided by residues 307 to 309 (TID), 352 to 354 (MGR), Glu408, and 460 to 463 (YMIR). The active-site Proton acceptor is Asp309.

This sequence belongs to the phosphofructokinase type A (PFKA) family. PPi-dependent PFK group II subfamily. Atypical ATP-dependent clade 'X' sub-subfamily. As to quaternary structure, homotetramer. Requires Mg(2+) as cofactor. As to expression, expressed in roots, leaves, stems and flowers.

It localises to the plastid. The protein resides in the chloroplast. The enzyme catalyses beta-D-fructose 6-phosphate + ATP = beta-D-fructose 1,6-bisphosphate + ADP + H(+). It participates in carbohydrate degradation; glycolysis; D-glyceraldehyde 3-phosphate and glycerone phosphate from D-glucose: step 3/4. With respect to regulation, allosterically activated by AMP. Functionally, catalyzes the phosphorylation of D-fructose 6-phosphate to fructose 1,6-bisphosphate by ATP, the first committing step of glycolysis. The polypeptide is ATP-dependent 6-phosphofructokinase 5, chloroplastic (Arabidopsis thaliana (Mouse-ear cress)).